Reading from the N-terminus, the 280-residue chain is Aquaporin PIP2-7 (280 aa).

An N-acetylmethionine modification is found at Met1. Residues 1–38 (MSKEVSEEGKTHHGKDYVDPPPAPLLDMGELKSWSFYR) are Cytoplasmic-facing. Lys3 is modified (N6,N6-dimethyllysine). The chain crosses the membrane as a helical span at residues 39-59 (ALIAEFIATLLFLYVTVATVI). Over 60–69 (GHKKQTGPCD) the chain is Extracellular. Residues 70-90 (GVGLLGIAWAFGGMIFVLVYC) form a helical membrane-spanning segment. The Cytoplasmic portion of the chain corresponds to 91–118 (TAGISGGHINPAVTFGLFLARKVSLVRA). The NPA 1 signature appears at 100–102 (NPA). Residues 119 to 139 (LGYMIAQCLGAICGVGFVKAF) form a helical membrane-spanning segment. The Extracellular segment spans residues 140-160 (MKTPYNTLGGGANTVADGYSK). A helical membrane pass occupies residues 161 to 181 (GTALGAEIIGTFVLVYTVFSA). The Cytoplasmic segment spans residues 182 to 192 (TDPKRSARDSH). Residues 193–213 (IPVLAPLPIGFAVFMVHLATI) form a helical membrane-spanning segment. At 214 to 242 (PITGTGINPARSFGAAVIYNNEKAWDDQW) the chain is on the extracellular side. The NPA 2 motif lies at 221 to 223 (NPA). The helical transmembrane segment at 243-263 (IFWVGPFLGALAAAAYHQYIL) threads the bilayer. The Cytoplasmic segment spans residues 264-280 (RASAIKALGSFRSNATN). A phosphoserine mark is found at Ser273 and Ser276. Thr279 bears the Phosphothreonine mark.

It belongs to the MIP/aquaporin (TC 1.A.8) family. PIP (TC 1.A.8.11) subfamily. As to quaternary structure, interacts with SYP61 and SYP121 in trafficking vesicles and at the plasma membrane. In terms of tissue distribution, highly expressed in flowers, expressed at low levels in siliques, and at low level in leaves and roots. Highly levels in elongating cells in both roots and shoots.

The protein localises to the cell membrane. Water channel required to facilitate the transport of water across cell membrane. May be involved in the osmoregulation in plants under high osmotic stress such as under a high salt condition. The sequence is that of Aquaporin PIP2-7 from Arabidopsis thaliana (Mouse-ear cress).